Here is a 150-residue protein sequence, read N- to C-terminus: Cytochrome b5 type B (150 aa).

Positions 1 to 15 are excised as a propeptide; sequence MSGSMATAEASGSDG. The tract at residues 1–20 is disordered; sequence MSGSMATAEASGSDGKGQEV. S23 is modified (phosphoserine). One can recognise a Cytochrome b5 heme-binding domain in the interval 24–100; sequence VTYYRLEEVA…LKQYYIGDIH (77 aa). An N6-acetyllysine modification is found at K34. S37 carries the post-translational modification Phosphoserine. K39 carries the post-translational modification N6-methyllysine. Residues H59 and H83 each coordinate heme. S84 is modified (phosphoserine). A helical membrane pass occupies residues 123–140; it reads WAYWILPIIGAVLLGFLY.

Belongs to the cytochrome b5 family. As to quaternary structure, component of a complex composed of cytochrome b5, NADH-cytochrome b5 reductase (CYB5R3) and MTARC2.

The protein localises to the mitochondrion outer membrane. In terms of biological role, cytochrome b5 is a membrane-bound hemoprotein functioning as an electron carrier for several membrane-bound oxygenases. The chain is Cytochrome b5 type B (CYB5B) from Homo sapiens (Human).